Reading from the N-terminus, the 380-residue chain is Cytochrome b (380 aa).

4 helical membrane-spanning segments follow: residues 34–54, 78–99, 114–134, and 179–199; these read FGSL…LLAM, WLIR…YLHI, WNTG…GYVL, and FFAL…IHLT. Heme b-binding residues include histidine 84 and histidine 98. Residues histidine 183 and histidine 197 each coordinate heme b. An a ubiquinone-binding site is contributed by histidine 202. 4 consecutive transmembrane segments (helical) span residues 227–247, 289–309, 321–341, and 348–368; these read LKDF…ALFS, LGGV…PFLH, ISQL…WVGS, and FIII…ILFP.

Belongs to the cytochrome b family. In terms of assembly, the cytochrome bc1 complex contains 11 subunits: 3 respiratory subunits (MT-CYB, CYC1 and UQCRFS1), 2 core proteins (UQCRC1 and UQCRC2) and 6 low-molecular weight proteins (UQCRH/QCR6, UQCRB/QCR7, UQCRQ/QCR8, UQCR10/QCR9, UQCR11/QCR10 and a cleavage product of UQCRFS1). This cytochrome bc1 complex then forms a dimer. Heme b serves as cofactor.

It localises to the mitochondrion inner membrane. In terms of biological role, component of the ubiquinol-cytochrome c reductase complex (complex III or cytochrome b-c1 complex) that is part of the mitochondrial respiratory chain. The b-c1 complex mediates electron transfer from ubiquinol to cytochrome c. Contributes to the generation of a proton gradient across the mitochondrial membrane that is then used for ATP synthesis. This is Cytochrome b (MT-CYB) from Pelecanoides urinatrix (Common diving petrel).